The following is a 342-amino-acid chain: Phosphoribosylformylglycinamidine cyclo-ligase (342 aa).

The protein belongs to the AIR synthase family.

Its subcellular location is the cytoplasm. It catalyses the reaction 2-formamido-N(1)-(5-O-phospho-beta-D-ribosyl)acetamidine + ATP = 5-amino-1-(5-phospho-beta-D-ribosyl)imidazole + ADP + phosphate + H(+). It functions in the pathway purine metabolism; IMP biosynthesis via de novo pathway; 5-amino-1-(5-phospho-D-ribosyl)imidazole from N(2)-formyl-N(1)-(5-phospho-D-ribosyl)glycinamide: step 2/2. This Staphylococcus saprophyticus subsp. saprophyticus (strain ATCC 15305 / DSM 20229 / NCIMB 8711 / NCTC 7292 / S-41) protein is Phosphoribosylformylglycinamidine cyclo-ligase.